Here is a 496-residue protein sequence, read N- to C-terminus: Lysine--tRNA ligase (496 aa).

Mg(2+) is bound by residues glutamate 403 and glutamate 410.

The protein belongs to the class-II aminoacyl-tRNA synthetase family. Homodimer. It depends on Mg(2+) as a cofactor.

The protein resides in the cytoplasm. The catalysed reaction is tRNA(Lys) + L-lysine + ATP = L-lysyl-tRNA(Lys) + AMP + diphosphate. The polypeptide is Lysine--tRNA ligase (Aster yellows witches'-broom phytoplasma (strain AYWB)).